The primary structure comprises 97 residues: MKMICAIYRSTKRDQTYLYIEKKDDFSRIPEELLQSFGEPQFAMLLDLAQRQRLANADIEKVKQALTDQGFYLQVPPPVESMLNAYLDELKNSEKTE.

The 85-residue stretch at Met-3 to Leu-87 folds into the YcgL domain.

The polypeptide is YcgL domain-containing protein PMI1171 (Proteus mirabilis (strain HI4320)).